The chain runs to 680 residues: Pescadillo homolog (680 aa).

Residues 315–336 form a disordered region; the sequence is GEDEKPKAITNGEGESETPTDA. Residues 359 to 471 enclose the BRCT domain; the sequence is DPSQLFANCT…ELKEPNQYAP (113 aa). The segment at 494 to 680 is disordered; it reads VPLEEQQTEA…ERKMAKGKAT (187 aa). Acidic residues-rich tracts occupy residues 511–530, 543–556, and 565–576; these read DVED…DDEA, GSDD…EEAD, and AEVDDASEDDEQ. Composition is skewed to basic and acidic residues over residues 597-610, 617-635, and 654-664; these read KASE…DPKS, RKEL…ERAK, and NKKDAESEKLR. A coiled-coil region spans residues 609-680; the sequence is KSKAKQQKRK…ERKMAKGKAT (72 aa). Positions 665-680 are enriched in basic residues; sequence EKRRRIERKMAKGKAT.

The protein belongs to the pescadillo family. In terms of assembly, component of the NOP7 complex, composed of ERB1, NOP7 and YTM1. The complex is held together by ERB1, which interacts with NOP7 via its N-terminal domain and with YTM1 via a high-affinity interaction between the seven-bladed beta-propeller domains of the 2 proteins. The NOP7 complex associates with the 66S pre-ribosome.

It is found in the nucleus. The protein resides in the nucleolus. The protein localises to the nucleoplasm. In terms of biological role, component of the NOP7 complex, which is required for maturation of the 25S and 5.8S ribosomal RNAs and formation of the 60S ribosome. The protein is Pescadillo homolog of Pyricularia oryzae (strain 70-15 / ATCC MYA-4617 / FGSC 8958) (Rice blast fungus).